The primary structure comprises 178 residues: MNPFHDLEPGPNVPEVVYALIEIPKGSRNKYELDKETGLLKLDRVLYTPFHYPVDYGIIPRTWYEDGDPFDIMVIMREPTYPLTIIEARPIGLFKMIDSGDKDYKVLAVPVEDPYFKDWKDISDVPKAFLDEIAHFFKRYKELEGKEIIVEGWEGAEAAKREILRAIEMYKEKFGKKE.

3 residues coordinate substrate: K30, R44, and Y56. Positions 66, 71, and 103 each coordinate Mg(2+). Residue Y140 coordinates substrate.

The protein belongs to the PPase family. In terms of assembly, homohexamer. The cofactor is Mg(2+).

It localises to the cytoplasm. The enzyme catalyses diphosphate + H2O = 2 phosphate + H(+). In terms of biological role, catalyzes the hydrolysis of inorganic pyrophosphate (PPi) forming two phosphate ions. This chain is Inorganic pyrophosphatase, found in Pyrococcus horikoshii (strain ATCC 700860 / DSM 12428 / JCM 9974 / NBRC 100139 / OT-3).